The chain runs to 118 residues: Fluoride-specific ion channel FluC 1 (118 aa).

Transmembrane regions (helical) follow at residues 1–21 (MIQC…RGFV) and 29–49 (FNTS…FCIG). Glycine 71 and threonine 74 together coordinate Na(+). The chain crosses the membrane as a helical span at residues 95-115 (LFILYSILQYGVSFVACLLGY).

Belongs to the fluoride channel Fluc/FEX (TC 1.A.43) family.

Its subcellular location is the cell membrane. The catalysed reaction is fluoride(in) = fluoride(out). Its activity is regulated as follows. Na(+) is not transported, but it plays an essential structural role and its presence is essential for fluoride channel function. Functionally, fluoride-specific ion channel. Important for reducing fluoride concentration in the cell, thus reducing its toxicity. The chain is Fluoride-specific ion channel FluC 1 from Staphylococcus saprophyticus subsp. saprophyticus (strain ATCC 15305 / DSM 20229 / NCIMB 8711 / NCTC 7292 / S-41).